The sequence spans 470 residues: Zinc finger protein pat-9 (470 aa).

Positions 1–25 (MENRTPMQHHSGYEIVKSEPPSTPK) are disordered. 3 C2H2-type zinc fingers span residues 84-106 (YPCN…QNSH), 112-134 (FECD…KRIH), and 140-162 (FVCT…KDMH). The disordered stretch occupies residues 191-235 (MEQEENGGLPASSSASSVISHPLITTTSGNKKRSKAAKAKQTPSS). The Nuclear localization signal motif lies at 221–230 (KKRSKAAKAK).

This sequence belongs to the krueppel C2H2-type zinc-finger protein family. Expressed in body wall muscle and gonad (at protein level).

Its subcellular location is the nucleus. It localises to the chromosome. Its function is as follows. Probable transcription factor; required for proper organization of muscle myofilaments and for their recruitment to the M line. The polypeptide is Zinc finger protein pat-9 (Caenorhabditis elegans).